The primary structure comprises 131 residues: MSWQTYVDEHLMCDIDGHHLTAAAIIGHDGSVWAQSSSFPQFKPEEVAAIMKDFDEPGSLAPTGLHLGGTKYMVIQGEPGAVIRGKKGSGGITVKKTGQALIIGIYDEPLTPGQCNMIVERLGDYLLEQGM.

It belongs to the profilin family. In terms of assembly, occurs in many kinds of cells as a complex with monomeric actin in a 1:1 ratio.

It is found in the cytoplasm. Its subcellular location is the cytoskeleton. In terms of biological role, binds to actin and affects the structure of the cytoskeleton. At high concentrations, profilin prevents the polymerization of actin, whereas it enhances it at low concentrations. By binding to PIP2, it inhibits the formation of IP3 and DG. The chain is Profilin-3 from Hevea brasiliensis (Para rubber tree).